A 573-amino-acid polypeptide reads, in one-letter code: Trehalose synthase (573 aa).

Aspartate 70 provides a ligand contact to substrate. Asparagine 112 is a binding site for Ca(2+). Positions 113 and 178 each coordinate substrate. Position 180 (aspartate 180) interacts with Ca(2+). Residue arginine 208 coordinates substrate. Aspartate 210 serves as the catalytic Nucleophile. Ca(2+) contacts are provided by tyrosine 214, leucine 215, and glutamate 217. The Proton donor role is filled by glutamate 252. The substrate site is built by histidine 326 and aspartate 327.

This sequence belongs to the glycosyl hydrolase 13 family. TreS subfamily.

It carries out the reaction D-maltose = alpha,alpha-trehalose. In terms of biological role, catalyzes the reversible interconversion of maltose and alpha,alpha-trehalose by transglucosylation. The sequence is that of Trehalose synthase (treS) from Pimelobacter sp. (strain R48).